We begin with the raw amino-acid sequence, 381 residues long: DNA double-strand break repair protein Mre11 (381 aa).

The Mn(2+) site is built by D9, H11, D50, and D85. The active-site Proton donor is H86. Residues H156, H187, and H189 each contribute to the Mn(2+) site.

It belongs to the MRE11/RAD32 family. Homodimer. Forms a heterotetramer composed of two Mre11 subunits and two Rad50 subunits. Mn(2+) serves as cofactor.

Its activity is regulated as follows. Nuclease activity is regulated by Rad50. Part of the Rad50/Mre11 complex, which is involved in the early steps of DNA double-strand break (DSB) repair. The complex may facilitate opening of the processed DNA ends to aid in the recruitment of HerA and NurA. Mre11 binds to DSB ends and has both double-stranded 3'-5' exonuclease activity and single-stranded endonuclease activity. This Saccharolobus solfataricus (strain ATCC 35092 / DSM 1617 / JCM 11322 / P2) (Sulfolobus solfataricus) protein is DNA double-strand break repair protein Mre11.